The primary structure comprises 92 residues: Small ribosomal subunit protein uS19 (92 aa).

This sequence belongs to the universal ribosomal protein uS19 family.

Its function is as follows. Protein S19 forms a complex with S13 that binds strongly to the 16S ribosomal RNA. This chain is Small ribosomal subunit protein uS19, found in Yersinia pestis (strain Pestoides F).